The chain runs to 502 residues: Alpha-globin transcription factor CP2 (502 aa).

The Grh/CP2 DB domain maps to 61–300 (ENKILPFQYV…SPGFNSSHSS (240 aa)). The segment at 133-395 (EHQQLEGWRW…VRPRLTIYVC (263 aa)) is DNA-binding. Disordered regions lie at residues 238 to 268 (FKPK…YQPS) and 294 to 325 (FNSS…DNLL). The span at 241 to 265 (KGADRKQKTDREKMEKRTPHEKEKY) shows a compositional bias: basic and acidic residues. Residue S353 is modified to Phosphoserine.

The protein belongs to the grh/CP2 family. CP2 subfamily. Binds to DNA as a dimer, isoform 3 does not bind to DNA or affect the binding of isoform 1 to DNA. Interacts with UBP1 and PIAS1, and is probably part of a complex containing TFCP2, UBP1 and PIAS1. Component of the SSP (stage selector protein) complex, which appears to be a heteromer of TFCP2 and 2 copies of NFE4. In terms of tissue distribution, ubiquitous. Expressed in brain, ovary, kidney, thymus, spleen, liver, adrenal, heart and lung (at protein level).

It localises to the nucleus. Its function is as follows. Binds a variety of cellular and viral promoters including fibrinogen, alpha-globin, SV40 and HIV-1 promoters. Activation of the alpha-globin promoter in erythroid cells is via synergistic interaction with UBP1. Functions as part of the SSP (stage selector protein) complex. Facilitates the interaction of the gamma-globin genes with enhancer elements contained in the locus control region in fetal erythroid cells. Interacts by binding to the stage selector element (SSE) in the proximal gamma-globin promoter. The polypeptide is Alpha-globin transcription factor CP2 (TFCP2) (Homo sapiens (Human)).